Reading from the N-terminus, the 158-residue chain is Ribonuclease H (158 aa).

The RNase H type-1 domain maps to 3-144 (ELKLIHIFTD…CDQLARAAAE (142 aa)). Mg(2+) contacts are provided by aspartate 12, glutamate 50, aspartate 72, and aspartate 136.

It belongs to the RNase H family. As to quaternary structure, monomer. Requires Mg(2+) as cofactor.

The protein localises to the cytoplasm. The enzyme catalyses Endonucleolytic cleavage to 5'-phosphomonoester.. Endonuclease that specifically degrades the RNA of RNA-DNA hybrids. In Shewanella sp. (strain MR-7), this protein is Ribonuclease H.